Reading from the N-terminus, the 817-residue chain is DNA replication licensing factor Mcm6 (817 aa).

Residues 152 to 179 form a C4-type zinc finger; sequence CLDCQTEIRNVEQQFKFTNPTICRNPVC. Positions 338 to 544 constitute an MCM domain; that stretch reads LYQNLISSLF…VVDYAIARKI (207 aa). Serine 391, threonine 392, alanine 393, lysine 394, serine 395, and asparagine 496 together coordinate ATP. Positions 520-523 match the Arginine finger motif; sequence SRFD. The ADP site is built by arginine 611 and glutamate 614.

It belongs to the MCM family. Component of the Mcm2-7 complex. The complex forms a toroidal hexameric ring with the proposed subunit order Mcm2-Mcm6-Mcm4-Mcm7-Mcm3-Mcm5. The heterodimers of Mcm4/Mcm6 and Mcm3/Mcm5 interact with Mcm2 and Mcm7. In terms of tissue distribution, in stage 12 embryos, strongly expressed in the CNS and weakly in the gut.

The protein resides in the nucleus. It carries out the reaction ATP + H2O = ADP + phosphate + H(+). In terms of biological role, acts as a component of the Mcm2-7 complex (Mcm complex) which is the putative replicative helicase essential for 'once per cell cycle' DNA replication initiation and elongation in eukaryotic cells. Core component of CDC45-MCM-GINS (CMG) helicase, the molecular machine that unwinds template DNA during replication, and around which the replisome is built. The active ATPase sites in the Mcm2-7 ring are formed through the interaction surfaces of two neighboring subunits such that a critical structure of a conserved arginine finger motif is provided in trans relative to the ATP-binding site of the Walker A box of the adjacent subunit. The six ATPase active sites, however, are likely to contribute differentially to the complex helicase activity Required for DNA replication and cell proliferation. Required for mitotic cycles, endocycles, and the special S phase associated with the amplification of chorion genes; has a role in origin unwinding or fork elongation at chorion loci. This is DNA replication licensing factor Mcm6 from Drosophila melanogaster (Fruit fly).